A 349-amino-acid chain; its full sequence is GDSL esterase/lipase At1g58725 (349 aa).

The first 19 residues, 1–19 (MKIQILLFALVLIFVEANA), serve as a signal peptide directing secretion. N-linked (GlcNAc...) asparagine glycosylation is present at Asn-25. Residue Ser-37 is the Nucleophile of the active site. A glycan (N-linked (GlcNAc...) asparagine) is linked at Asn-316. Active-site residues include Asp-324 and His-327.

It belongs to the 'GDSL' lipolytic enzyme family.

It localises to the secreted. This Arabidopsis thaliana (Mouse-ear cress) protein is GDSL esterase/lipase At1g58725.